Consider the following 86-residue polypeptide: Neurotoxin LmNaTx17 (86 aa).

The signal sequence occupies residues 1-18 (MKILFVIVLAAFFIGVHC). In terms of domain architecture, LCN-type CS-alpha/beta spans 19–85 (KHGYPVQYSG…TWDYKTGKCR (67 aa)). 4 disulfides stabilise this stretch: Cys33–Cys84, Cys37–Cys58, Cys44–Cys65, and Cys48–Cys67.

The protein belongs to the long (4 C-C) scorpion toxin superfamily. Sodium channel inhibitor family. Beta subfamily. As to expression, expressed by the venom gland.

The protein resides in the secreted. Binds voltage-independently at site-4 of sodium channels (Nav) and shift the voltage of activation toward more negative potentials thereby affecting sodium channel activation and promoting spontaneous and repetitive firing. This Lychas mucronatus (Chinese swimming scorpion) protein is Neurotoxin LmNaTx17.